We begin with the raw amino-acid sequence, 247 residues long: MIVLTQSGTLLFDQRFKLSKFLFVVIATGFPLLLQQASLIYGYNHEQIYRICRSFLYILPLLNCKRGRISTSGLQLPRHLHYECLEWGLLCGTHPAIQIVGPTIVIKLDDPTTAAAYRSELLRVSSSSYIQNAAGLSNGWGHDMEAFVRNAICLLELRERSIPQSGLRDLMGNHQHLVRSLLDACKVDHFVPLDFQHRSLMLNFARLYNQLDLQGRAKSFRALTGFPVYVPSEDYLEGSFLQKELQE.

Residues Leu-76–Pro-95 form the F-box-like domain.

Belongs to the polerovirus P0 protein family.

Functionally, suppressor of RNA-mediated gene silencing, also known as post-transcriptional gene silencing (PTGS), a mechanism of plant viral defense that limits the accumulation of viral RNAs. The P0 protein suppresses local PTGS using its F-box-like domain to mediate destabilization and degradation of the AGO1 protein, although not via an interaction with host SKP1A. Participates, together with the proteins P1 and P7, in the inhibition of the induction of aphid-induced host phytohormones. This could play a role in the attraction to the infected plants by aphids. The sequence is that of Suppressor of silencing P0 from Potato leafroll virus (strain Potato/Netherlands/Wageningen/1989) (PLrV).